Here is a 504-residue protein sequence, read N- to C-terminus: Maturase K (504 aa).

It belongs to the intron maturase 2 family. MatK subfamily.

The protein localises to the plastid. The protein resides in the chloroplast. Usually encoded in the trnK tRNA gene intron. Probably assists in splicing its own and other chloroplast group II introns. This is Maturase K from Pachira aquatica (Guiana chestnut).